A 560-amino-acid polypeptide reads, in one-letter code: MFS-type transporter pgmG (560 aa).

Residues 1-32 are disordered; sequence MSETVTQTETDQRPATARSLGAEEKEAKSDEQ. The segment covering 21-31 has biased composition (basic and acidic residues); sequence GAEEKEAKSDE. The next 8 helical transmembrane spans lie at 45–65, 84–104, 111–131, 141–161, 174–194, 201–221, 242–262, and 275–295; these read FIVI…NTIV, WLSV…SKIY, WLYL…GAAP, ALAG…LSVN, TGLT…GFAV, WSFY…LFML, LGTI…NFGG, and CFVV…YCIG. Asn-300 carries N-linked (GlcNAc...) asparagine glycosylation. A helical membrane pass occupies residues 313–333; the sequence is FIILFVQTASVATVFFVPIYF. Asn-343 is a glycosylation site (N-linked (GlcNAc...) asparagine). 5 consecutive transmembrane segments (helical) span residues 346 to 366, 378 to 398, 409 to 429, 440 to 460, and 515 to 535; these read AIDA…AMIL, MPWY…MYTI, GYMI…FAVA, VATG…LAIA, and ISQV…LAIF.

Belongs to the major facilitator superfamily. TCR/Tet family.

The protein resides in the membrane. MFS-type transporter; part of the gene cluster that mediates the biosynthesis of pleosporalin A, ascomycone A, as well as a third cryptic naphthoquinone derived pigment, all responsible for the coloration of conidia. Seems not to be involved in pigment biosynthesis although its expression is regulated by the cluster-specific transcription factor pgmR. In Aspergillus terreus, this protein is MFS-type transporter pgmG.